Reading from the N-terminus, the 393-residue chain is Small RNA 2'-O-methyltransferase (393 aa).

S-adenosyl-L-methionine contacts are provided by Ser60, Asp78, and Ser114. Positions 132, 135, 136, and 181 each coordinate Mg(2+). A disordered region spans residues 283 to 309; that stretch reads RVSHLPRRKEQDGEQGDKPKDIGGSKA. Over residues 290 to 305 the composition is skewed to basic and acidic residues; it reads RKEQDGEQGDKPKDIG.

The protein belongs to the methyltransferase superfamily. HEN1 family. It depends on Mg(2+) as a cofactor.

Its subcellular location is the cytoplasm. The enzyme catalyses small RNA 3'-end nucleotide + S-adenosyl-L-methionine = small RNA 3'-end 2'-O-methylnucleotide + S-adenosyl-L-homocysteine + H(+). Methyltransferase that adds a 2'-O-methyl group at the 3'-end of piRNAs, a class of 24 to 30 nucleotide RNAs that are generated by a Dicer-independent mechanism and are primarily derived from transposons and other repeated sequence elements. This probably protects the 3'-end of piRNAs from uridylation activity and subsequent degradation. Stabilization of piRNAs is essential for gametogenesis. The protein is Small RNA 2'-O-methyltransferase (HENMT1) of Macaca fascicularis (Crab-eating macaque).